A 38-amino-acid polypeptide reads, in one-letter code: Odorant-binding protein 2 (38 aa).

Belongs to the calycin superfamily. Lipocalin family. As to expression, nasal mucosa.

The protein resides in the secreted. Its subcellular location is the extracellular space. This soluble protein may play a specific role in odor discrimination and perception. This is Odorant-binding protein 2 from Hystrix cristata (North African crested porcupine).